The primary structure comprises 301 residues: N-acetylmuramic acid 6-phosphate etherase (301 aa).

The region spanning 57 to 220 is the SIS domain; that stretch reads IAEAFRQGGR…TTGAMIRTGK (164 aa). Glu-85 (proton donor) is an active-site residue. Glu-116 is an active-site residue.

This sequence belongs to the GCKR-like family. MurNAc-6-P etherase subfamily. As to quaternary structure, homodimer.

It carries out the reaction N-acetyl-D-muramate 6-phosphate + H2O = N-acetyl-D-glucosamine 6-phosphate + (R)-lactate. Its pathway is amino-sugar metabolism; 1,6-anhydro-N-acetylmuramate degradation. The protein operates within amino-sugar metabolism; N-acetylmuramate degradation. It participates in cell wall biogenesis; peptidoglycan recycling. In terms of biological role, specifically catalyzes the cleavage of the D-lactyl ether substituent of MurNAc 6-phosphate, producing GlcNAc 6-phosphate and D-lactate. Together with AnmK, is also required for the utilization of anhydro-N-acetylmuramic acid (anhMurNAc) either imported from the medium or derived from its own cell wall murein, and thus plays a role in cell wall recycling. The chain is N-acetylmuramic acid 6-phosphate etherase from Photorhabdus laumondii subsp. laumondii (strain DSM 15139 / CIP 105565 / TT01) (Photorhabdus luminescens subsp. laumondii).